We begin with the raw amino-acid sequence, 314 residues long: tRNA pseudouridine synthase B (314 aa).

A substrate-binding site is contributed by H43. D48 functions as the Nucleophile in the catalytic mechanism. Residues Y76, Y179, and L200 each coordinate substrate.

This sequence belongs to the pseudouridine synthase TruB family. Type 1 subfamily.

It carries out the reaction uridine(55) in tRNA = pseudouridine(55) in tRNA. In terms of biological role, responsible for synthesis of pseudouridine from uracil-55 in the psi GC loop of transfer RNAs. The protein is tRNA pseudouridine synthase B of Salmonella paratyphi B (strain ATCC BAA-1250 / SPB7).